The sequence spans 493 residues: MEKYENLGLVGEGSYGMVMKCRNKDTGRIVAIKKFLESDDDKMVKKIAMREIKLLKQLRHENLVNLLEVCKKKKRWYLVFEFVDHTILDDLELFPNGLDYQVVQKYLFQIINGIGFCHSHNIIHRDIKPENILVSQSGVVKLCDFGFARTLAAPGEVYTDYVATRWYRAPELLVGDVKYGKAVDVWAIGCLVTEMFMGEPLFPGDSDIDQLYHIMMCLGNLIPRHQELFNKNPVFAGVRLPEIKEREPLERRYPKLSEVVIDLAKKCLHIDPDKRPFCAELLHHDFFQMDGFAERFSQELQLKVQKDARNVSLSKKSQNRKKEKEKDDSLVEERKTLVVQDTNADPKIKDYKLFKIKGSKIDGEKAEKGNRASNASCLHDSRTSHNKIVPSTSLKDCSNVSVDHTRNPSVAIPPLTHNLSAVAPSINSGMGTETIPIQGYRVDEKTKKCSIPFVKPNRHSPSGIYNINVTTLVSGPPLSDDSGADLPQMEHQH.

The region spanning 4 to 287 (YENLGLVGEG…CAELLHHDFF (284 aa)) is the Protein kinase domain. ATP-binding positions include 10–18 (VGEGSYGMV) and Lys33. The [NKR]KIAxRE signature appears at 45–51 (KKIAMRE). Asp126 serves as the catalytic Proton acceptor. Positions 363–384 (GEKAEKGNRASNASCLHDSRTS) are disordered.

The protein belongs to the protein kinase superfamily. CMGC Ser/Thr protein kinase family. CDC2/CDKX subfamily. Expressed in testis and kidney, and at lower level in brain and lung.

Its subcellular location is the cytoplasm. It is found in the nucleus. It carries out the reaction L-seryl-[protein] + ATP = O-phospho-L-seryl-[protein] + ADP + H(+). The enzyme catalyses L-threonyl-[protein] + ATP = O-phospho-L-threonyl-[protein] + ADP + H(+). The sequence is that of Cyclin-dependent kinase-like 2 from Homo sapiens (Human).